Consider the following 121-residue polypeptide: Large ribosomal subunit protein bL19 (121 aa).

The protein belongs to the bacterial ribosomal protein bL19 family.

Functionally, this protein is located at the 30S-50S ribosomal subunit interface and may play a role in the structure and function of the aminoacyl-tRNA binding site. This Borreliella burgdorferi (strain ATCC 35210 / DSM 4680 / CIP 102532 / B31) (Borrelia burgdorferi) protein is Large ribosomal subunit protein bL19 (rplS).